The primary structure comprises 230 residues: Large ribosomal subunit protein uL1 (230 aa).

This sequence belongs to the universal ribosomal protein uL1 family. In terms of assembly, part of the 50S ribosomal subunit.

Functionally, binds directly to 23S rRNA. The L1 stalk is quite mobile in the ribosome, and is involved in E site tRNA release. Protein L1 is also a translational repressor protein, it controls the translation of the L11 operon by binding to its mRNA. This is Large ribosomal subunit protein uL1 from Aster yellows witches'-broom phytoplasma (strain AYWB).